Consider the following 645-residue polypeptide: Serine/threonine-protein kinase Nek11 (645 aa).

In terms of domain architecture, Protein kinase spans Tyr29–Leu287. ATP-binding positions include Leu35–Val43 and Lys61. The Proton acceptor role is filled by Asp158. Position 273 is a phosphoserine; by CHEK1 (Ser273). Residues Arg346 to Gln385 adopt a coiled-coil conformation. A disordered region spans residues Gly399–Pro445.

It belongs to the protein kinase superfamily. NEK Ser/Thr protein kinase family. NIMA subfamily. Interacts with isoform 1 of NEK2. Mn(2+) serves as cofactor. Mg(2+) is required as a cofactor. In terms of processing, phosphorylated by NEK2. Phosphorylation at Ser-273 is important for its activation. Poorly expressed in cerebellum, trachea, lung, appendix, and uterus.

It is found in the nucleus. The protein localises to the nucleolus. The enzyme catalyses L-seryl-[protein] + ATP = O-phospho-L-seryl-[protein] + ADP + H(+). It carries out the reaction L-threonyl-[protein] + ATP = O-phospho-L-threonyl-[protein] + ADP + H(+). With respect to regulation, autorepressed by intramolecular binding of the C-terminus which dissociates following phosphorylation by NEK2 isoform 1 in G1/S-arrested cells. NEK2 isoform 2 is largely not present in the nucleolus, and does not appear to phosphorylate NEK11. Activated in response to DNA damage. Inhibited by zinc. Its function is as follows. Protein kinase which plays an important role in the G2/M checkpoint response to DNA damage. Controls degradation of CDC25A by directly phosphorylating it on residues whose phosphorylation is required for BTRC-mediated polyubiquitination and degradation. This is Serine/threonine-protein kinase Nek11 from Homo sapiens (Human).